The following is a 476-amino-acid chain: MANSAKAEEYEKMSLEQAKASVNSETESSFNINENTTASGTGLSEKTSVCRQVDIARKRKEFEDDLVKESSSCGKDTPSKKRKLDPEIVPEEKDCGDAEGNSKKRKRETEDVPKDKSSTGDGTQNKRKIALEDVPEKQKNLEEGHSSTVAAHYNELQEVGLEKRSQSRIFYLRNFNNWMKSVLIGEFLEKVRQKKKRDITVLDLGCGKGGDLLKWKKGRINKLVCTDIADVSVKQCQQRYEDMKNRRDSEYIFSAEFITADSSKELLIDKFRDPQMCFDICSCQFVCHYSFESYEQADMMLRNACERLSPGGYFIGTTPNSFELIRRLEASETESFGNEIYTVKFQKKGDYPLFGCKYDFNLEGVVDVPEFLVYFPLLNEMAKKYNMKLVYKKTFLEFYEEKIKNNENKMLLKRMQALEPYPANESSKLVSEKVDDYEHAAKYMKNSQVRLPLGTLSKSEWEATSIYLVFAFEKQQ.

The span at 1–14 (MANSAKAEEYEKMS) shows a compositional bias: basic and acidic residues. The disordered stretch occupies residues 1–146 (MANSAKAEEY…KQKNLEEGHS (146 aa)). Residues 20-50 (ASVNSETESSFNINENTTASGTGLSEKTSVC) show a composition bias toward polar residues. Phosphoserine is present on residues S24, S28, and S29. Basic and acidic residues-rich tracts occupy residues 54-68 (DIAR…DLVK) and 84-118 (LDPE…DKSS). At S118 the chain carries Phosphoserine. Residues 126–128 (KRK) carry the Nuclear localization signal motif. Residues 129-145 (IALEDVPEKQKNLEEGH) are compositionally biased toward basic and acidic residues. Positions 167–475 (SRIFYLRNFN…IYLVFAFEKQ (309 aa)) constitute an mRNA cap 0 methyltransferase domain. MRNA is bound at residue 176-177 (NN). Positions 180, 205, 227, 261, 284, and 289 each coordinate S-adenosyl-L-methionine.

Belongs to the class I-like SAM-binding methyltransferase superfamily. mRNA cap 0 methyltransferase family. Interacts with importin alpha, leading to stimulate both RNA-binding and methyltransferase activity. Interaction with importin alpha and beta is required for its nuclear localization, importin beta dissociating in response to RanGTP, allowing RNMT-importin alpha to bind RNA substrates. Interacts with elongating form of polymerase II and RNGTT. Interacts with RAMAC, this interaction significantly enhances RNA-binding and cap methyltransferase activity. As to expression, widely expressed.

Its subcellular location is the nucleus. It carries out the reaction a 5'-end (5'-triphosphoguanosine)-ribonucleoside in mRNA + S-adenosyl-L-methionine = a 5'-end (N(7)-methyl 5'-triphosphoguanosine)-ribonucleoside in mRNA + S-adenosyl-L-homocysteine. Its activity is regulated as follows. Methyltransferase activity is activated by RAMAC. In terms of biological role, catalytic subunit of the mRNA-capping methyltransferase RNMT:RAMAC complex that methylates the N7 position of the added guanosine to the 5'-cap structure of mRNAs. Binds RNA containing 5'-terminal GpppC. In Homo sapiens (Human), this protein is mRNA cap guanine-N(7) methyltransferase (RNMT).